The following is a 316-amino-acid chain: Aspartate carbamoyltransferase catalytic subunit (316 aa).

Carbamoyl phosphate-binding residues include Arg59 and Thr60. Residue Lys88 coordinates L-aspartate. Carbamoyl phosphate contacts are provided by Arg109, His137, and Gln140. L-aspartate is bound by residues Arg170 and Arg232. Residues Leu269 and Pro270 each coordinate carbamoyl phosphate.

Belongs to the aspartate/ornithine carbamoyltransferase superfamily. ATCase family. Heterooligomer of catalytic and regulatory chains.

The enzyme catalyses carbamoyl phosphate + L-aspartate = N-carbamoyl-L-aspartate + phosphate + H(+). It participates in pyrimidine metabolism; UMP biosynthesis via de novo pathway; (S)-dihydroorotate from bicarbonate: step 2/3. Catalyzes the condensation of carbamoyl phosphate and aspartate to form carbamoyl aspartate and inorganic phosphate, the committed step in the de novo pyrimidine nucleotide biosynthesis pathway. This is Aspartate carbamoyltransferase catalytic subunit from Methanobrevibacter smithii (strain ATCC 35061 / DSM 861 / OCM 144 / PS).